The chain runs to 306 residues: tRNA dimethylallyltransferase (306 aa).

Residue 9-16 (GPTGIGKT) participates in ATP binding. 11–16 (TGIGKT) is a substrate binding site. The interaction with substrate tRNA stretch occupies residues 34–37 (DSMQ).

It belongs to the IPP transferase family. Monomer. Mg(2+) is required as a cofactor.

It carries out the reaction adenosine(37) in tRNA + dimethylallyl diphosphate = N(6)-dimethylallyladenosine(37) in tRNA + diphosphate. Functionally, catalyzes the transfer of a dimethylallyl group onto the adenine at position 37 in tRNAs that read codons beginning with uridine, leading to the formation of N6-(dimethylallyl)adenosine (i(6)A). This chain is tRNA dimethylallyltransferase, found in Lactobacillus johnsonii (strain CNCM I-12250 / La1 / NCC 533).